We begin with the raw amino-acid sequence, 266 residues long: Zinc transporter ZupT (266 aa).

8 consecutive transmembrane segments (helical) span residues L8 to V28, F35 to L55, Q70 to I90, G123 to F143, G152 to V172, F185 to I205, W209 to I229, and L246 to A266. The Fe(2+) site is built by N134 and E137. Zn(2+)-binding residues include E137 and H162. Fe(2+) contacts are provided by N163, E166, and E195. Residue E166 participates in Zn(2+) binding.

Belongs to the ZIP transporter (TC 2.A.5) family. ZupT subfamily.

Its subcellular location is the cell membrane. It carries out the reaction Zn(2+)(in) = Zn(2+)(out). Functionally, mediates zinc uptake. May also transport other divalent cations. The protein is Zinc transporter ZupT of Chlorobium phaeovibrioides (strain DSM 265 / 1930) (Prosthecochloris vibrioformis (strain DSM 265)).